Consider the following 227-residue polypeptide: Isopentenyl-diphosphate Delta-isomerase 1 (227 aa).

A substrate-binding site is contributed by lysine 36. The Mg(2+) site is built by histidine 40 and histidine 51. One can recognise a Nudix hydrolase domain in the interval 49-199 (LLHRAFSVFL…EIKLTPWFKI (151 aa)). Substrate is bound by residues arginine 70 and lysine 74. The active site involves cysteine 86. A substrate-binding site is contributed by serine 87. Mg(2+) is bound by residues glutamate 146 and glutamate 148. Residue glutamate 148 is part of the active site. Lysine 176 carries the post-translational modification N6-acetyllysine. Positions 225–227 (HRL) match the Microbody targeting signal motif.

It belongs to the IPP isomerase type 1 family. In terms of assembly, monomer. It depends on Mg(2+) as a cofactor.

It localises to the peroxisome. The enzyme catalyses isopentenyl diphosphate = dimethylallyl diphosphate. The protein operates within isoprenoid biosynthesis; dimethylallyl diphosphate biosynthesis; dimethylallyl diphosphate from isopentenyl diphosphate: step 1/1. In terms of biological role, catalyzes the 1,3-allylic rearrangement of the homoallylic substrate isopentenyl (IPP) to its highly electrophilic allylic isomer, dimethylallyl diphosphate (DMAPP). This chain is Isopentenyl-diphosphate Delta-isomerase 1 (Idi1), found in Mus musculus (Mouse).